The sequence spans 401 residues: Probable tRNA sulfurtransferase (401 aa).

Residues 60–165 (EPISEQLKGV…EQATYITFKD (106 aa)) form the THUMP domain. Residues 183–184 (ML), 208–209 (HF), arginine 265, glycine 287, and glutamine 296 contribute to the ATP site.

It belongs to the ThiI family.

It is found in the cytoplasm. The enzyme catalyses [ThiI sulfur-carrier protein]-S-sulfanyl-L-cysteine + a uridine in tRNA + 2 reduced [2Fe-2S]-[ferredoxin] + ATP + H(+) = [ThiI sulfur-carrier protein]-L-cysteine + a 4-thiouridine in tRNA + 2 oxidized [2Fe-2S]-[ferredoxin] + AMP + diphosphate. It carries out the reaction [ThiS sulfur-carrier protein]-C-terminal Gly-Gly-AMP + S-sulfanyl-L-cysteinyl-[cysteine desulfurase] + AH2 = [ThiS sulfur-carrier protein]-C-terminal-Gly-aminoethanethioate + L-cysteinyl-[cysteine desulfurase] + A + AMP + 2 H(+). Its pathway is cofactor biosynthesis; thiamine diphosphate biosynthesis. Catalyzes the ATP-dependent transfer of a sulfur to tRNA to produce 4-thiouridine in position 8 of tRNAs, which functions as a near-UV photosensor. Also catalyzes the transfer of sulfur to the sulfur carrier protein ThiS, forming ThiS-thiocarboxylate. This is a step in the synthesis of thiazole, in the thiamine biosynthesis pathway. The sulfur is donated as persulfide by IscS. The sequence is that of Probable tRNA sulfurtransferase from Bacillus pumilus (strain SAFR-032).